Here is a 424-residue protein sequence, read N- to C-terminus: Interferon regulatory factor 8 (424 aa).

Positions 7-114 form a DNA-binding region, IRF tryptophan pentad repeat; that stretch reads GRRLRQWLIE…EPYKVYRIVP (108 aa).

It belongs to the IRF family. As to quaternary structure, interacts with COPS2. Interacts (via C-terminus) with TRIM21 (via C-terminus). Interacts with the BATF-JUNB heterodimer. Interacts with BATF (via bZIP domain); the interaction is direct. Interacts with SPI1. In terms of processing, ubiquitinated. Ubiquitination by TRIM21 in macrophages, a process that is strongly increased upon interferon gamma stimulation, leds to the enhanced transcriptional activity of target cytokine genes. Ubiquitination leads to its degradation by the proteasome. Post-translationally, sumoylated with SUMO3. Desumoylated by SENP1. Expressed in bone marrow macrophages (at protein level). Mainly expressed in lymphoid tissues. Predominantly expressed in CD8(+)-expressing dendritic cells.

It is found in the nucleus. The protein localises to the cytoplasm. In terms of biological role, transcription factor that specifically binds to the upstream regulatory region of type I interferon (IFN) and IFN-inducible MHC class I genes (the interferon consensus sequence (ICS)). Can both act as a transcriptional activator or repressor. Plays a negative regulatory role in cells of the immune system. Involved in CD8(+) dendritic cell differentiation by forming a complex with the BATF-JUNB heterodimer in immune cells, leading to recognition of AICE sequence (5'-TGAnTCA/GAAA-3'), an immune-specific regulatory element, followed by cooperative binding of BATF and IRF8 and activation of genes. Required for the development of plasmacytoid dendritic cells (pDCs), which produce most of the type I IFN in response to viral infection. Positively regulates macroautophagy in dendritic cells. Acts as a transcriptional repressor of osteoclast differentiation factors such as NFATC1 and EEIG1. This chain is Interferon regulatory factor 8, found in Mus musculus (Mouse).